We begin with the raw amino-acid sequence, 211 residues long: Probable transcriptional regulatory protein SgaR (211 aa).

One can recognise a Response regulatory domain in the interval 10–126 (EVSIVDQNPV…VLLEAVVSVA (117 aa)). Asp-15 carries the post-translational modification 4-aspartylphosphate. The 66-residue stretch at 141-206 (NHDPLESLTA…MAVALHVSIN (66 aa)) folds into the HTH luxR-type domain. A DNA-binding region (H-T-H motif) is located at residues 165-184 (NLQIAARTGISRNTVKYHLK).

In terms of biological role, not known. Could act on the sgaA gene expression. This is Probable transcriptional regulatory protein SgaR (sgaR) from Hyphomicrobium methylovorum.